The primary structure comprises 669 residues: Thrombospondin-type laminin G domain and EAR repeat-containing protein (669 aa).

A signal peptide spans 1–19 (MSALLSLCFVLPLAAPGHG). In terms of domain architecture, Laminin G-like spans 58 to 277 (GLQLSVAAPR…RVTLGPQPPC (220 aa)). EAR repeat units follow at residues 313 to 358 (DYVE…KWTE), 360 to 408 (KFVS…KWSH), 412 to 460 (KFTP…KWNP), 464 to 506 (LFEA…VHSH), 514 to 570 (SFQL…ELNV), 574 to 622 (AFVK…RWQG), and 625 to 668 (GFVA…RLRT). An N-linked (GlcNAc...) asparagine glycan is attached at Asn-320. Asn-468, Asn-497, Asn-556, and Asn-569 each carry an N-linked (GlcNAc...) asparagine glycan.

It is found in the secreted. Its subcellular location is the cell surface. It localises to the cell projection. The protein resides in the stereocilium. Plays a critical role in tooth and hair follicle morphogenesis through regulation of the Notch signaling pathway. May play a role in development or function of the auditory system. This chain is Thrombospondin-type laminin G domain and EAR repeat-containing protein (TSPEAR), found in Homo sapiens (Human).